The following is a 212-amino-acid chain: Photosynthetic NDH subunit of subcomplex B 5, chloroplastic (212 aa).

Residues 1–48 constitute a chloroplast transit peptide; that stretch reads MATVTILSPKSIPKVTDSKFGARVSDQIVNVVKCGKSGRRLKLAKLVS. The next 2 membrane-spanning stretches (helical) occupy residues 115–135 and 136–156; these read FQGL…YFDA and PGEY…IIEM.

As to quaternary structure, part of the chloroplast NDH complex, composed of a mixture of chloroplast and nucleus encoded subunits. Component of the NDH subcomplex B, at least composed of PnsB1, PnsB2, PnsB3, PnsB4 and PnsB5.

It localises to the plastid. The protein localises to the chloroplast membrane. Its function is as follows. NDH shuttles electrons from NAD(P)H:plastoquinone, via FMN and iron-sulfur (Fe-S) centers, to quinones in the photosynthetic chain and possibly in a chloroplast respiratory chain. The immediate electron acceptor for the enzyme in this species is believed to be plastoquinone. Couples the redox reaction to proton translocation, and thus conserves the redox energy in a proton gradient. This Arabidopsis thaliana (Mouse-ear cress) protein is Photosynthetic NDH subunit of subcomplex B 5, chloroplastic.